A 1065-amino-acid chain; its full sequence is RNA2 polyprotein (1065 aa).

In terms of assembly, interacts with the large capsid protein. Interacts with the movement protein (via C-terminus). Interacts with the small capsid protein. Homomultimer; assembles as pentons. As to quaternary structure, interacts (via C-terminus) with the small capsid protein. Post-translationally, specific enzymatic cleavages by picornain 3C-like protease in vivo yield mature proteins.

It is found in the host endoplasmic reticulum. Its subcellular location is the host cell junction. The protein localises to the host plasmodesma. The protein resides in the virion. Its function is as follows. Acts as a suppressor of post-transcriptional gene silencing (PTGS), a mechanism of plant viral defense that limits the accumulation of viral RNAs. Binds ssRNA. In terms of biological role, transports the viral genome to neighboring plant cells directly through plasmosdesmata, without any budding. The movement protein allows efficient cell to cell propagation, by bypassing the host cell wall barrier. Acts by forming a tubular structure at the host plasmodesmata, enlarging it enough to allow free passage of virion capsids. Binds to GTP and to single-stranded RNA and single-stranded DNA in a non-sequence-specific manner. Also acts as a suppressor of post-transcriptional gene silencing (PTGS), a mechanism of plant viral defense that limits the accumulation of viral RNAs. Functionally, together with the small capsid protein, forms an icosahedral capsid (T=3) enclosing the viral positive strand RNA genome, with a diameter of approximately 300 Angstroms. The large capsid protein interacts with the viral RNA. Also acts as a suppressor of post-transcriptional gene silencing (PTGS), a mechanism of plant viral defense that limits the accumulation of viral RNAs. Binds ssRNA. Together with the large capsid protein, forms an icosahedral capsid (T=3) enclosing the viral positive strand RNA genome, with a diameter of approximately 300 Angstroms. The capsid is formed from 60 copies each of the large and the small capsid protein. The small capsid protein forms the turrets at the fivefold axes of the viral particle. This chain is RNA2 polyprotein, found in Broad bean wilt virus 2 (BBWV-2).